The chain runs to 370 residues: 4-hydroxy-3-methylbut-2-en-1-yl diphosphate synthase (flavodoxin) (370 aa).

Cys271, Cys274, Cys306, and Glu313 together coordinate [4Fe-4S] cluster.

It belongs to the IspG family. [4Fe-4S] cluster serves as cofactor.

It carries out the reaction (2E)-4-hydroxy-3-methylbut-2-enyl diphosphate + oxidized [flavodoxin] + H2O + 2 H(+) = 2-C-methyl-D-erythritol 2,4-cyclic diphosphate + reduced [flavodoxin]. It functions in the pathway isoprenoid biosynthesis; isopentenyl diphosphate biosynthesis via DXP pathway; isopentenyl diphosphate from 1-deoxy-D-xylulose 5-phosphate: step 5/6. Its function is as follows. Converts 2C-methyl-D-erythritol 2,4-cyclodiphosphate (ME-2,4cPP) into 1-hydroxy-2-methyl-2-(E)-butenyl 4-diphosphate. In Actinobacillus pleuropneumoniae serotype 5b (strain L20), this protein is 4-hydroxy-3-methylbut-2-en-1-yl diphosphate synthase (flavodoxin).